A 581-amino-acid polypeptide reads, in one-letter code: MAASGRGLRKAVAASPFPAWRRAHTEAGGGLKPEYDAVVIGAGHNGLVVAAYLQRLGVNTAVFERRHVIGGAAVTEEIIPGFKFSRASYLLSLLRPQIYTDLELKKHGLRLHLRNPYSFTPMLEEGAGSKVPRSLLLGTDMAENQKQIAQFSRKDAQVFPRYEEFMHRLALAIDPLLDAAPVDMAAFQRGSLLQRMRSFSTLKPLLKAGRILGAQLPRYYEVLTAPITKVLDQWFESEPLKATLATDAVIGAMTSPHTPGSGYVLLHHVMGGLEGMQGAWGYVQGGMGALSDAIASSATTHGASIFTEKTVAKVQVNSEGCVQGVVLEDGTEVRSKVVLSNTSPQITFLKLTPQEWLPEEFLERISQLDTRSPVTKINVAVDRLPSFLAAPNAPRGQPLPHHQCSIHLNCEDTLLLHQAFEDAMDGLPSHRPIIELCIPSSLDPPLAPSGCHVVSLFTQYTPYTLAGGKAWDEQERDAYADRVFDCVEVYAPGFKDSVVGRDILTPPDLERIFGLPGGNIFHCAMSLDQLYFARPVPLHSGYRCPLQGLYLCGSGAHPGGGVMGAAGRNAAHVAFRDLKSM.

38–71 (VVIGAGHNGLVVAAYLQRLGVNTAVFERRHVIGG) contacts FAD.

This sequence belongs to the carotenoid/retinoid oxidoreductase family. Interacts with COX5B; this interaction may contribute to localize PYROXD2 to the inner face of the inner mitochondrial membrane.

The protein resides in the mitochondrion matrix. In terms of biological role, probable oxidoreductase that may play a role as regulator of mitochondrial function. This is Pyridine nucleotide-disulfide oxidoreductase domain-containing protein 2 from Pongo abelii (Sumatran orangutan).